We begin with the raw amino-acid sequence, 532 residues long: ATP synthase subunit alpha (532 aa).

ATP is bound at residue 171 to 178; it reads GDRQTGKT.

It belongs to the ATPase alpha/beta chains family. As to quaternary structure, F-type ATPases have 2 components, CF(1) - the catalytic core - and CF(0) - the membrane proton channel. CF(1) has five subunits: alpha(3), beta(3), gamma(1), delta(1), epsilon(1). CF(0) has three main subunits: a(1), b(2) and c(9-12). The alpha and beta chains form an alternating ring which encloses part of the gamma chain. CF(1) is attached to CF(0) by a central stalk formed by the gamma and epsilon chains, while a peripheral stalk is formed by the delta and b chains.

The protein resides in the cell membrane. The catalysed reaction is ATP + H2O + 4 H(+)(in) = ADP + phosphate + 5 H(+)(out). In terms of biological role, produces ATP from ADP in the presence of a proton gradient across the membrane. The alpha chain is a regulatory subunit. The sequence is that of ATP synthase subunit alpha from Amoebophilus asiaticus (strain 5a2).